Here is a 215-residue protein sequence, read N- to C-terminus: FBD domain-containing protein At3g58975 (215 aa).

The region spanning 122–199 is the FBD domain; that stretch reads RSLTSCPVKK…KLSSCNVQLL (78 aa).

This chain is FBD domain-containing protein At3g58975, found in Arabidopsis thaliana (Mouse-ear cress).